The chain runs to 471 residues: Tyrosine--tRNA ligase, mitochondrial (471 aa).

Tyr-71 is an L-tyrosine binding site. Asp-75 is a binding site for ATP. The 'HIGH' region signature appears at 76-85; it reads PTGDSLHVGH. 5 residues coordinate L-tyrosine: Asp-115, Tyr-215, Gln-219, Asp-222, and Gln-241. Residues Ile-268 and Lys-278 each coordinate ATP. The short motif at 275-279 is the 'KMSKS' region element; it reads KLGKS. N6-acetyllysine is present on residues Lys-349 and Lys-361.

It belongs to the class-I aminoacyl-tRNA synthetase family. As to quaternary structure, homodimer.

It localises to the mitochondrion matrix. It carries out the reaction tRNA(Tyr) + L-tyrosine + ATP = L-tyrosyl-tRNA(Tyr) + AMP + diphosphate + H(+). Catalyzes the attachment of tyrosine to tRNA(Tyr) in a two-step reaction: tyrosine is first activated by ATP to form Tyr-AMP and then transferred to the acceptor end of tRNA(Tyr). This is Tyrosine--tRNA ligase, mitochondrial (Yars2) from Rattus norvegicus (Rat).